The following is a 196-amino-acid chain: UPF0319 protein VV1_0237 (196 aa).

A signal peptide spans 1–19 (MKKMMILSALALFSSSLFA).

The protein belongs to the UPF0319 family.

This Vibrio vulnificus (strain CMCP6) protein is UPF0319 protein VV1_0237.